The primary structure comprises 221 residues: Imidazoleglycerol-phosphate dehydratase (221 aa).

The protein belongs to the imidazoleglycerol-phosphate dehydratase family.

The catalysed reaction is D-erythro-1-(imidazol-4-yl)glycerol 3-phosphate = 3-(imidazol-4-yl)-2-oxopropyl phosphate + H2O. The protein operates within amino-acid biosynthesis; L-histidine biosynthesis; L-histidine from 5-phospho-alpha-D-ribose 1-diphosphate: step 6/9. This is Imidazoleglycerol-phosphate dehydratase (HIS3) from Kluyveromyces marxianus (Yeast).